The following is a 115-amino-acid chain: Putative gamma-glutamylcyclotransferase VC_2546 (115 aa).

Tyrosine 8–leucine 11 contributes to the substrate binding site. The active-site Proton acceptor is the glutamate 73.

It belongs to the gamma-glutamylcyclotransferase family.

Its function is as follows. Putative gamma-glutamylcyclotransferase. This chain is Putative gamma-glutamylcyclotransferase VC_2546, found in Vibrio cholerae serotype O1 (strain ATCC 39315 / El Tor Inaba N16961).